Consider the following 884-residue polypeptide: Alanine--tRNA ligase (884 aa).

Residues His-570, His-574, Cys-676, and His-680 each contribute to the Zn(2+) site.

It belongs to the class-II aminoacyl-tRNA synthetase family. The cofactor is Zn(2+).

The protein localises to the cytoplasm. The catalysed reaction is tRNA(Ala) + L-alanine + ATP = L-alanyl-tRNA(Ala) + AMP + diphosphate. Catalyzes the attachment of alanine to tRNA(Ala) in a two-step reaction: alanine is first activated by ATP to form Ala-AMP and then transferred to the acceptor end of tRNA(Ala). Also edits incorrectly charged Ser-tRNA(Ala) and Gly-tRNA(Ala) via its editing domain. The polypeptide is Alanine--tRNA ligase (Lawsonia intracellularis (strain PHE/MN1-00)).